Here is a 694-residue protein sequence, read N- to C-terminus: MITVAPFVSLRFQFPLYIINRSTLFFRERTQYLVYNTCHILRTTAKTMPVVAEYAKSNRSSCRSCSNKIAVKSLRLGLISKGRGGVDMTRWHHFDCFPTDSESIASVDDIQGLSALEKEDQDALTKLVEQCGKVPAKKPDEKKGKAKKHIMGPKGLTKAATSSKVIADNAKSSRSSCNRCSQTIVSKDLRVGLVTEDSRGFDITRWHHLGCFPIDFHPIDSVEDIGGYSSLEKGDQMELKYLAEVNKKDKTLIDDVQKMDEGDDEAIADNELTEETKKGKHSPVAKLVEQPGEPAKEDEDEESKKPASDEISEQKTKDVKNSPDSSKVISEYAKSSRSTCKKCSQTIAAKELRLGLVTRNFRGFDMKQWHHLGCFPVDSDPIVSVEDIGGFSELQSGDQDALKELVQQCGKQTLVDKMDEDNDDTEAKIKLTEETNKRKHSEVGEMVEEDESLTKAKQQMAKTHKVNMSESTSQVEVEAEITLSASDVKDKYRDANLLPKWKAFETVIFLERDDGLNDSEKIAAFDFDGCLAKTSVKIVGADAWSLMYPSIPEKLQSLHDQGYKLVIFTNESNIDRWKNKRQAAVDSKIGRLNSFIERVKVPIQVFIACGVSSSGGKGGKDDLYRKPKAGMWQLMKKHFNSGIAIDMDKSFYVGDAAGRKMDHSDADIKFAQASGLKFFTPEEYFIPSSTSPGT.

PARP-type zinc fingers lie at residues 50-132 (VVAE…EQCG) and 165-247 (VIAD…EVNK). Positions 62, 65, 93, 96, 177, 180, 208, and 211 each coordinate Zn(2+). The disordered stretch occupies residues 266-331 (AIADNELTEE…SPDSSKVISE (66 aa)). The segment covering 302-321 (ESKKPASDEISEQKTKDVKN) has biased composition (basic and acidic residues). The segment covering 322–331 (SPDSSKVISE) has biased composition (polar residues). The PARP-type 3 zinc finger occupies 328–410 (VISEYAKSSR…ALKELVQQCG (83 aa)). Residues cysteine 340, cysteine 343, histidine 371, and cysteine 374 each contribute to the Zn(2+) site.

It in the C-terminal section; belongs to the DNA 3' phosphatase family. In terms of assembly, interacts with ROS1 (via the central region). Binds to XRCC1.

It is found in the nucleus. Its subcellular location is the nucleoplasm. The catalysed reaction is a 3'end (2'-deoxyribonucleotide 3'-phosphate)-DNA + H2O = a 3'-end 2'-deoxyribonucleotide-DNA + phosphate. Activated by the presence of DNA. Stimulated by XRCC1. Nick-sensing 3'-phosphoesterase involved in a base excision repair pathway required for active DNA demethylation. The N-terminal DNA-binding domain binds specifically to gap sites and sharply bends the target DNA. Lacks 5'-kinase activity but is capable of 3'-phosphoglycolate end processing. Inactive on 3'-alpha,beta-unsaturated aldehyde (3'-dRP). Protects partially genes from transcriptional silencing by preventing promoter DNA hypermethylation. The polypeptide is Polynucleotide 3'-phosphatase ZDP (ZDP) (Arabidopsis thaliana (Mouse-ear cress)).